A 247-amino-acid polypeptide reads, in one-letter code: DNA polymerase epsilon subunit D (247 aa).

Residues 128-247 (KKHKADKKVP…EGQNSSDDDS (120 aa)) are disordered. Over residues 150–159 (RLKDNDEQII) the composition is skewed to basic and acidic residues. Composition is skewed to acidic residues over residues 165-188 (ADME…NDED), 196-215 (EEEE…EVEE), and 224-247 (EEDE…DDDS).

In terms of assembly, heterotetramer. Consists of four subunits: POL2, DPB2, DPB3 and DPB4.

Its subcellular location is the nucleus. Its function is as follows. As accessory component of the DNA polymerase epsilon (DNA polymerase II) participates in chromosomal DNA replication. The polypeptide is DNA polymerase epsilon subunit D (DPB4) (Debaryomyces hansenii (strain ATCC 36239 / CBS 767 / BCRC 21394 / JCM 1990 / NBRC 0083 / IGC 2968) (Yeast)).